A 367-amino-acid chain; its full sequence is Molybdopterin synthase catalytic subunit (367 aa).

Substrate is bound by residues 101–102 (HR), K117, and 124–126 (KKE). The tract at residues 325–350 (RHFTKREPSSMEAAPPKKSRKKSYSA) is disordered.

This sequence belongs to the MoaE family. MOCS2B subfamily. In terms of assembly, heterotetramer; composed of 2 small (Mocs2A) and 2 large (Mocs2B) subunits. Component of the Ada2a-containing (ATAC) complex composed of at least Ada2a, Atac1, Hcf, Ada3, Gcn5, Mocs2B, Charac-14, Atac3, Atac2, NC2beta and wds.

It is found in the cytoplasm. It localises to the nucleus. It carries out the reaction 2 [molybdopterin-synthase sulfur-carrier protein]-C-terminal-Gly-aminoethanethioate + cyclic pyranopterin phosphate + H2O = molybdopterin + 2 [molybdopterin-synthase sulfur-carrier protein]-C-terminal Gly-Gly + 2 H(+). It participates in cofactor biosynthesis; molybdopterin biosynthesis. Functionally, catalytic subunit of the molybdopterin synthase complex, a complex that catalyzes the conversion of precursor Z into molybdopterin. Acts by mediating the incorporation of 2 sulfur atoms from thiocarboxylated Mocs2A into precursor Z to generate a dithiolene group. Involved during biosynthesis of the molybdenum cofactor. This is Molybdopterin synthase catalytic subunit from Drosophila melanogaster (Fruit fly).